The following is a 697-amino-acid chain: Polyribonucleotide nucleotidyltransferase (697 aa).

The Mg(2+) site is built by Asp488 and Asp494. The region spanning 555 to 614 is the KH domain; it reads PTLLTLKINPDKIRDVIGKGGATIRALTEETGCTIDIEDDGSVKIYGETREKADEAVRRV. The region spanning 624–692 is the S1 motif domain; that stretch reads GAIYEGKVTR…QRGRIKLSMK (69 aa).

The protein belongs to the polyribonucleotide nucleotidyltransferase family. Component of the RNA degradosome, which is a multiprotein complex involved in RNA processing and mRNA degradation. The cofactor is Mg(2+).

It is found in the cytoplasm. The catalysed reaction is RNA(n+1) + phosphate = RNA(n) + a ribonucleoside 5'-diphosphate. In terms of biological role, involved in mRNA degradation. Catalyzes the phosphorolysis of single-stranded polyribonucleotides processively in the 3'- to 5'-direction. This is Polyribonucleotide nucleotidyltransferase from Alcanivorax borkumensis (strain ATCC 700651 / DSM 11573 / NCIMB 13689 / SK2).